The following is a 140-amino-acid chain: Small ribosomal subunit protein uS12 (140 aa).

Disordered stretches follow at residues threonine 36 to lysine 56 and threonine 117 to glutamate 140.

Belongs to the universal ribosomal protein uS12 family. As to quaternary structure, part of the 30S ribosomal subunit. Contacts proteins S8 and S17. May interact with IF1 in the 30S initiation complex.

Functionally, with S4 and S5 plays an important role in translational accuracy. Its function is as follows. Interacts with and stabilizes bases of the 16S rRNA that are involved in tRNA selection in the A site and with the mRNA backbone. Located at the interface of the 30S and 50S subunits, it traverses the body of the 30S subunit contacting proteins on the other side and probably holding the rRNA structure together. The combined cluster of proteins S8, S12 and S17 appears to hold together the shoulder and platform of the 30S subunit. This chain is Small ribosomal subunit protein uS12, found in Malacoplasma penetrans (strain HF-2) (Mycoplasma penetrans).